A 348-amino-acid chain; its full sequence is Methylthioribose-1-phosphate isomerase (348 aa).

Substrate-binding positions include 54-56, Arg-96, and Gln-199; that span reads RGA. The Proton donor role is filled by Asp-240. 250–251 is a substrate binding site; the sequence is NK.

Belongs to the eIF-2B alpha/beta/delta subunits family. MtnA subfamily.

It catalyses the reaction 5-(methylsulfanyl)-alpha-D-ribose 1-phosphate = 5-(methylsulfanyl)-D-ribulose 1-phosphate. It functions in the pathway amino-acid biosynthesis; L-methionine biosynthesis via salvage pathway; L-methionine from S-methyl-5-thio-alpha-D-ribose 1-phosphate: step 1/6. Functionally, catalyzes the interconversion of methylthioribose-1-phosphate (MTR-1-P) into methylthioribulose-1-phosphate (MTRu-1-P). The chain is Methylthioribose-1-phosphate isomerase from Thioalkalivibrio sulfidiphilus (strain HL-EbGR7).